Consider the following 141-residue polypeptide: Hemoglobin subunit alpha (141 aa).

A Globin domain is found at 1-141; it reads VLSGTDKTNV…VGLVLTAKYR (141 aa). O2 is bound at residue His58. His87 lines the heme b pocket.

The protein belongs to the globin family. In terms of assembly, heterotetramer of two alpha chains and two beta chains. As to expression, red blood cells.

Involved in oxygen transport from the lung to the various peripheral tissues. The sequence is that of Hemoglobin subunit alpha (HBA) from Psittacula krameri (Rose-ringed parakeet).